We begin with the raw amino-acid sequence, 135 residues long: HVA22-like protein d (135 aa).

Transmembrane regions (helical) follow at residues 11 to 31 (LHSG…SVIA), 42 to 62 (QWLA…ILQS), and 63 to 83 (LIEW…WLVL).

The protein belongs to the DP1 family. In terms of tissue distribution, predominantly expressed in flower buds.

It is found in the membrane. The chain is HVA22-like protein d (HVA22D) from Arabidopsis thaliana (Mouse-ear cress).